The chain runs to 556 residues: Membrane protein insertase YidC (556 aa).

A run of 5 helical transmembrane segments spans residues 6–26 (IVLY…WQID), 332–352 (LDLT…FSLM), 358–378 (VVGN…LAFY), 428–448 (LGGC…YWVL), and 501–521 (VMMF…SGLV).

The protein belongs to the OXA1/ALB3/YidC family. Type 1 subfamily. Interacts with the Sec translocase complex via SecD. Specifically interacts with transmembrane segments of nascent integral membrane proteins during membrane integration.

It is found in the cell inner membrane. Its function is as follows. Required for the insertion and/or proper folding and/or complex formation of integral membrane proteins into the membrane. Involved in integration of membrane proteins that insert both dependently and independently of the Sec translocase complex, as well as at least some lipoproteins. Aids folding of multispanning membrane proteins. The polypeptide is Membrane protein insertase YidC (Legionella pneumophila (strain Corby)).